The following is a 280-amino-acid chain: Protein FLOURY 1-like (280 aa).

The chain crosses the membrane as a helical span at residues 22–42; it reads GFGFGIFVIGCSSQFFNLVFL. Residues 153–187 are disordered; sequence VALSETELDEKNHHGEEEESEDEEESQSQNDEDQL. The span at 169–187 shows a compositional bias: acidic residues; it reads EEESEDEEESQSQNDEDQL. The region spanning 188 to 280 is the GTD-binding domain; the sequence is LDVITLRTMV…LDDDEDKIQM (93 aa).

The protein resides in the membrane. The sequence is that of Protein FLOURY 1-like from Arabidopsis thaliana (Mouse-ear cress).